A 592-amino-acid chain; its full sequence is Dictomallein-1 (592 aa).

Residues 1–19 form the signal peptide; it reads MKILIILLVFLNLITNINC. Residues 140 to 402 form the Peptidase M66 domain; that stretch reads PNIGHETNLN…QNYFKDSIIY (263 aa). Residue His-294 participates in Zn(2+) binding. Residue Glu-295 is part of the active site. Residues His-298 and His-304 each contribute to the Zn(2+) site.

The protein belongs to the dictomallein family. Zn(2+) serves as cofactor.

The protein resides in the secreted. In Dictyostelium discoideum (Social amoeba), this protein is Dictomallein-1 (dtmlA).